Here is a 469-residue protein sequence, read N- to C-terminus: Dihydrolipoyl dehydrogenase (469 aa).

FAD contacts are provided by residues 40–48, Lys57, and Ala120; that span reads EKAVLGGVC. Cys48 and Cys53 are joined by a disulfide. Residues 186 to 190, Glu209, and 275 to 278 each bind NAD(+); these read GGGAI and AVGV. FAD-binding residues include Asp317 and Ala325. His450 serves as the catalytic Proton acceptor.

Belongs to the class-I pyridine nucleotide-disulfide oxidoreductase family. As to quaternary structure, homodimer. The cofactor is FAD.

Its subcellular location is the cytoplasm. The catalysed reaction is N(6)-[(R)-dihydrolipoyl]-L-lysyl-[protein] + NAD(+) = N(6)-[(R)-lipoyl]-L-lysyl-[protein] + NADH + H(+). Functionally, lipoamide dehydrogenase is a component of the alpha-ketoacid dehydrogenase complexes. The polypeptide is Dihydrolipoyl dehydrogenase (lpd) (Chlorobaculum tepidum (strain ATCC 49652 / DSM 12025 / NBRC 103806 / TLS) (Chlorobium tepidum)).